Here is a 287-residue protein sequence, read N- to C-terminus: MAAITAALVKELRERTGEGMMDCKKALEKAGGDIEKAIDDMRASGAIKAAKKAGNVAAEGAIAVKTDGKSAVLLEVNSQTDFLALQDDFKNFVAESLEEAFAQKLTDAAPLIASREAAREALVAKCGENVNIRRLVRVEGDVVGAYLHGNKIGAVVVLKGGDVELAKNIAMHVAASNPEFLDSSEISAEAIEREKGVFLQLNADKIAGKPENIVENMINGRITKFKAEASLKEQAFVMNPEVKVGELAKKAGAEIVSFTYFKVGEGIEKPVDDFAAEVAAQVAAAKQ.

An involved in Mg(2+) ion dislocation from EF-Tu region spans residues 80–83 (TDFL).

Belongs to the EF-Ts family.

The protein localises to the cytoplasm. In terms of biological role, associates with the EF-Tu.GDP complex and induces the exchange of GDP to GTP. It remains bound to the aminoacyl-tRNA.EF-Tu.GTP complex up to the GTP hydrolysis stage on the ribosome. The sequence is that of Elongation factor Ts from Pseudomonas putida (strain GB-1).